Reading from the N-terminus, the 145-residue chain is D-aminoacyl-tRNA deacylase (145 aa).

The Gly-cisPro motif, important for rejection of L-amino acids signature appears at 137-138 (GP).

It belongs to the DTD family. As to quaternary structure, homodimer.

The protein resides in the cytoplasm. The enzyme catalyses glycyl-tRNA(Ala) + H2O = tRNA(Ala) + glycine + H(+). The catalysed reaction is a D-aminoacyl-tRNA + H2O = a tRNA + a D-alpha-amino acid + H(+). An aminoacyl-tRNA editing enzyme that deacylates mischarged D-aminoacyl-tRNAs. Also deacylates mischarged glycyl-tRNA(Ala), protecting cells against glycine mischarging by AlaRS. Acts via tRNA-based rather than protein-based catalysis; rejects L-amino acids rather than detecting D-amino acids in the active site. By recycling D-aminoacyl-tRNA to D-amino acids and free tRNA molecules, this enzyme counteracts the toxicity associated with the formation of D-aminoacyl-tRNA entities in vivo and helps enforce protein L-homochirality. The protein is D-aminoacyl-tRNA deacylase of Escherichia coli O139:H28 (strain E24377A / ETEC).